The following is a 145-amino-acid chain: Photosystem I reaction center subunit VI-2, chloroplastic (145 aa).

The transit peptide at 1 to 50 (MASFATIAAVQPSAAVKGLGGSSLAGAKLFIKPSRQSFKTKSTRAGAVVA) directs the protein to the chloroplast. The chain crosses the membrane as a helical span at residues 102–118 (LLLKFLILGGGSLLTYV). The tract at residues 126–145 (VLPIKRGPQEPPKLGPRGKL) is disordered.

It belongs to the psaH family.

It localises to the plastid. The protein resides in the chloroplast thylakoid membrane. In terms of biological role, possible role could be the docking of the LHC I antenna complex to the core complex. This is Photosystem I reaction center subunit VI-2, chloroplastic (PSAH2) from Arabidopsis thaliana (Mouse-ear cress).